The primary structure comprises 115 residues: Large ribosomal subunit protein bL20 (115 aa).

Belongs to the bacterial ribosomal protein bL20 family.

Its function is as follows. Binds directly to 23S ribosomal RNA and is necessary for the in vitro assembly process of the 50S ribosomal subunit. It is not involved in the protein synthesizing functions of that subunit. The chain is Large ribosomal subunit protein bL20 from Prochlorococcus marinus subsp. pastoris (strain CCMP1986 / NIES-2087 / MED4).